Consider the following 244-residue polypeptide: Haloacid dehalogenase-like hydrolase domain-containing protein Sgpp (244 aa).

Asp28 functions as the Nucleophile in the catalytic mechanism. Mg(2+)-binding residues include Asp28, Asp30, and Asp189. Asp30 serves as the catalytic Proton donor.

Belongs to the HAD-like hydrolase superfamily. DOG/GPP family. The cofactor is Mg(2+). Ubiquitous with highest expression in flowers.

Its function is as follows. Acts as a phosphosugar phosphatase on a broad range of sugar phosphate substrates with preferential activity on D-ribose-5-phosphate, 2-deoxy-D-ribose-5-phosphate, 2-deoxy-D-glucose-6-phosphate, and D-mannose-6-phosphate and with a lower activity on D-fructose-1-phosphate, D-glucose-6-phosphate, DL-glycerol-3-phosphate, and D-fructose-6-phosphate. The polypeptide is Haloacid dehalogenase-like hydrolase domain-containing protein Sgpp (SGPP) (Arabidopsis thaliana (Mouse-ear cress)).